Reading from the N-terminus, the 516-residue chain is Thiosulfate sulfurtransferase/rhodanese-like domain-containing protein 2 (516 aa).

S269 is subject to Phosphoserine. One can recognise a Rhodanese domain in the interval 301–396 (EQSDTILLDC…YLEEFPDGFY (96 aa)). C355 (cysteine persulfide intermediate) is an active-site residue. Residues 490–516 (RELLQHVRQPVSPEPGPDAEEDGPVLV) form a disordered region. Residues 506-516 (PDAEEDGPVLV) are compositionally biased toward acidic residues.

The chain is Thiosulfate sulfurtransferase/rhodanese-like domain-containing protein 2 (TSTD2) from Pongo abelii (Sumatran orangutan).